Here is a 770-residue protein sequence, read N- to C-terminus: Cullin-1 (770 aa).

The Cullin neddylation domain maps to 700 to 761 (DRKLQIQAAI…EKEYLMRVEG (62 aa)). Lys-714 is covalently cross-linked (Glycyl lysine isopeptide (Lys-Gly) (interchain with G-Cter in NEDD8)).

Belongs to the cullin family. In terms of assembly, part of a complex that includes culA, fbxA and regA. Formation of this complex is dependent on the MAP kinase erkB. Post-translationally, neddylated; which enhances the ubiquitination activity of SCF.

It participates in protein modification; protein ubiquitination. Functionally, probable core component of cullin-based SCF-like E3 ubiquitin-protein ligase complexes which mediate the ubiquitination and subsequent proteasomal degradation of target proteins. The E3 ubiquitin-protein ligase activity of the complex is dependent on the neddylation of the cullin subunit. Required at several stages during development. CulA and fbxA regulate multicellular development by targeting regA for degradation via a pathway that requires erkB function, leading to an increase in cAMP and PKA activity. This Dictyostelium discoideum (Social amoeba) protein is Cullin-1 (culA).